The sequence spans 865 residues: Envelope glycoprotein B (865 aa).

Positions methionine 1–serine 21 are cleaved as a signal peptide. At serine 22–proline 731 the chain is on the virion surface side. Asparagine 27 carries an N-linked (GlcNAc...) asparagine; by host glycan. Disulfide bonds link cysteine 49–cysteine 530, cysteine 66–cysteine 486, cysteine 140–cysteine 204, cysteine 298–cysteine 346, and cysteine 553–cysteine 590. An involved in fusion and/or binding to host membrane region spans residues threonine 106–tyrosine 112. The N-linked (GlcNAc...) asparagine; by host glycan is linked to asparagine 184. An involved in fusion and/or binding to host membrane region spans residues glycine 191 to threonine 198. 4 N-linked (GlcNAc...) asparagine; by host glycosylation sites follow: asparagine 332, asparagine 364, asparagine 406, and asparagine 425. Asparagine 631 carries an N-linked (GlcNAc...) asparagine; by host glycan. Hydrophobic membrane proximal region regions lie at residues isoleucine 676–serine 729 and aspartate 683–serine 729. Residues phenylalanine 732 to tyrosine 752 form a helical membrane-spanning segment. The Intravirion portion of the chain corresponds to arginine 753–valine 865. Positions tyrosine 809–leucine 812 match the Golgi targeting motif. A disordered region spans residues isoleucine 843–valine 865. The Internalization motif signature appears at tyrosine 850–leucine 853.

The protein belongs to the herpesviridae glycoprotein B family. As to quaternary structure, homotrimer; disulfide-linked. Binds to heparan sulfate proteoglycans. Interacts with gH/gL heterodimer. A proteolytic cleavage by host furin generates two subunits that remain linked by disulfide bonds.

The protein localises to the virion membrane. Its subcellular location is the host cell membrane. The protein resides in the host endosome membrane. It localises to the host Golgi apparatus membrane. Envelope glycoprotein that forms spikes at the surface of virion envelope. Essential for the initial attachment to heparan sulfate moieties of the host cell surface proteoglycans. Involved in fusion of viral and cellular membranes leading to virus entry into the host cell. Following initial binding to its host receptors, membrane fusion is mediated by the fusion machinery composed at least of gB and the heterodimer gH/gL. May be involved in the fusion between the virion envelope and the outer nuclear membrane during virion egress. The protein is Envelope glycoprotein B of Gallid herpesvirus 2 (strain Chicken/Md5/ATCC VR-987) (GaHV-2).